Here is a 100-residue protein sequence, read N- to C-terminus: Large ribosomal subunit protein uL23 (100 aa).

It belongs to the universal ribosomal protein uL23 family. In terms of assembly, part of the 50S ribosomal subunit. Contacts protein L29, and trigger factor when it is bound to the ribosome.

In terms of biological role, one of the early assembly proteins it binds 23S rRNA. One of the proteins that surrounds the polypeptide exit tunnel on the outside of the ribosome. Forms the main docking site for trigger factor binding to the ribosome. This is Large ribosomal subunit protein uL23 from Mycobacterium tuberculosis (strain ATCC 25177 / H37Ra).